The chain runs to 145 residues: MAPKKKKKVTGLIKLQIQAGQANPAPPVGPALGAHGVNIMEFCKAYNAATENQRGNVVPVEITVYEDRSFDFKLKTPPAAKLLLKAAGLQKGSGVPHTQKVGKVSMAQVREIAETKKEDLNARDIDAAAKIIAGTARSMGITVEG.

This sequence belongs to the universal ribosomal protein uL11 family. In terms of assembly, part of the ribosomal stalk of the 50S ribosomal subunit. Interacts with L10 and the large rRNA to form the base of the stalk. L10 forms an elongated spine to which L12 dimers bind in a sequential fashion forming a multimeric L10(L12)X complex. In terms of processing, one or more lysine residues are methylated.

Forms part of the ribosomal stalk which helps the ribosome interact with GTP-bound translation factors. This is Large ribosomal subunit protein uL11 from Corynebacterium glutamicum (strain ATCC 13032 / DSM 20300 / JCM 1318 / BCRC 11384 / CCUG 27702 / LMG 3730 / NBRC 12168 / NCIMB 10025 / NRRL B-2784 / 534).